We begin with the raw amino-acid sequence, 476 residues long: MVDTASKTGFISQIIGPVVDVEFPGGELPTVYSAIVVGEGESSVTCEVQQLLGSNKVRAVSMTSTDGLKRGAAVVNTGAPITVPVGVPTLGRIFNVLGEPVDEMGPCEATAGLPIHRAAPAFTDLDTKPSVFETGIKVVDLLAPYKRGGKIGLFGGAGVGKTVLIMELINNIARAHGGVSVFGGVGERTREGNDLYAEMKESGVIDEKKLDNSKVALVYGQMNEPPGARMRVGLTALTMAEYFRDVNKQDVLLFIDNIFRFVQAGSEVSALLGRMPSAVGYQPTLATEMGVLQERITSTTEGSITSIQAVYVPADDLTDPAPATTFAHLDATTVLSRGLASKGIYPAVDPLDSTSTMLQPEIVGAEHYATAQNIKETLQRYKELQDIIAILGLDELSEEDRLTVARARKVERFLSQPFFVAEVFTGSPGKYVSLADSIDGFNRLLDGEFDDLPEQSFYLVGDINEAIEKAAKINAK.

ATP is bound at residue G155–T162.

It belongs to the ATPase alpha/beta chains family. In terms of assembly, F-type ATPases have 2 components, CF(1) - the catalytic core - and CF(0) - the membrane proton channel. CF(1) has five subunits: alpha(3), beta(3), gamma(1), delta(1), epsilon(1). CF(0) has four main subunits: a(1), b(1), b'(1) and c(9-12).

The protein resides in the plastid. The protein localises to the chloroplast thylakoid membrane. It catalyses the reaction ATP + H2O + 4 H(+)(in) = ADP + phosphate + 5 H(+)(out). Its function is as follows. Produces ATP from ADP in the presence of a proton gradient across the membrane. The catalytic sites are hosted primarily by the beta subunits. This chain is ATP synthase subunit beta, chloroplastic, found in Emiliania huxleyi (Coccolithophore).